A 166-amino-acid polypeptide reads, in one-letter code: AP-3 complex subunit sigma (166 aa).

This sequence belongs to the adaptor complexes small subunit family. As to quaternary structure, adaptor protein complex 3 (AP-3) is a heterotetramer composed of two large adaptins (delta-type subunit and beta-type subunit), a medium adaptin (mu-type subunit) and a small adaptin (sigma-type subunit).

Its subcellular location is the cytoplasm. The protein resides in the golgi apparatus. The protein localises to the cytoplasmic vesicle membrane. Its function is as follows. Part of the AP-3 complex, an adaptor-related complex which seems to be clathrin-associated. The complex is associated with the Golgi region as well as more peripheral structures. It facilitates the budding of vesicles from the Golgi membrane and may be directly involved in trafficking to the vacuole. It also function in maintaining the identity of lytic vacuoles and in regulating the transition between storage and lytic vacuoles. The protein is AP-3 complex subunit sigma of Arabidopsis thaliana (Mouse-ear cress).